Reading from the N-terminus, the 273-residue chain is Shikimate kinase (273 aa).

85 to 95 contacts ATP; the sequence is PVGKGLKSSSA.

It belongs to the GHMP kinase family. Archaeal shikimate kinase subfamily.

The protein resides in the cytoplasm. The enzyme catalyses shikimate + ATP = 3-phosphoshikimate + ADP + H(+). It functions in the pathway metabolic intermediate biosynthesis; chorismate biosynthesis; chorismate from D-erythrose 4-phosphate and phosphoenolpyruvate: step 5/7. In Pyrococcus furiosus (strain ATCC 43587 / DSM 3638 / JCM 8422 / Vc1), this protein is Shikimate kinase.